Here is a 365-residue protein sequence, read N- to C-terminus: Aminomethyltransferase (365 aa).

This sequence belongs to the GcvT family. As to quaternary structure, the glycine cleavage system is composed of four proteins: P, T, L and H.

The catalysed reaction is N(6)-[(R)-S(8)-aminomethyldihydrolipoyl]-L-lysyl-[protein] + (6S)-5,6,7,8-tetrahydrofolate = N(6)-[(R)-dihydrolipoyl]-L-lysyl-[protein] + (6R)-5,10-methylene-5,6,7,8-tetrahydrofolate + NH4(+). The glycine cleavage system catalyzes the degradation of glycine. The chain is Aminomethyltransferase from Yersinia enterocolitica serotype O:8 / biotype 1B (strain NCTC 13174 / 8081).